Here is a 471-residue protein sequence, read N- to C-terminus: Ammonium transporter Rh type B (471 aa).

Residues 1–13 lie on the Cytoplasmic side of the membrane; sequence MAGSPSRAAGRRL. A helical transmembrane segment spans residues 14–33; that stretch reads QLPLLSFLQGATAVLFAVFV. At 34–60 the chain is on the extracellular side; that stretch reads RYNHKTDAALWHRGNHSNADNEFYFRY. Residue Asn48 is glycosylated (N-linked (GlcNAc...) asparagine). Residues 61-81 traverse the membrane as a helical segment; the sequence is PSFQDVHAMVFVGFGFLMVFL. Residues 82 to 85 lie on the Cytoplasmic side of the membrane; that stretch reads QRYG. Residues 86–106 form a helical membrane-spanning segment; the sequence is FSSVGFTFLLAAFALQWSTLV. At 107-123 the chain is on the extracellular side; that stretch reads QGFLHSFHGGHIHVGVE. Residues 124 to 144 traverse the membrane as a helical segment; the sequence is SMINADFCAGAVLISFGAVLG. The Cytoplasmic portion of the chain corresponds to 145-148; that stretch reads KTGP. The helical transmembrane segment at 149–169 threads the bilayer; that stretch reads AQLLLMALLEVVLFGINEFVL. The Extracellular segment spans residues 170-177; it reads LHLLGVRD. A helical transmembrane segment spans residues 178–200; the sequence is AGGSMTIHTFGAYFGLVLSQVLY. The Cytoplasmic portion of the chain corresponds to 201 to 217; it reads RPQLEKSKHRQGLYHSD. Residues 218–238 form a helical membrane-spanning segment; the sequence is LFAMIGTIFLWIFWPSFNAAL. The Extracellular portion of the chain corresponds to 239 to 249; it reads TSLGAGQHRTA. The helical transmembrane segment at 250 to 270 threads the bilayer; it reads LNTYYSLAASTLGTFALSALV. The Cytoplasmic segment spans residues 271 to 280; sequence GEDGRLDMVH. The chain crosses the membrane as a helical span at residues 281–301; sequence IQNAALAGRVVVGTSSEMMLT. Position 302 (Pro302) is a topological domain, extracellular. The chain crosses the membrane as a helical span at residues 303 to 323; the sequence is FGALAAGFLAGTVSTLGYKFF. Over 324-344 the chain is Cytoplasmic; the sequence is TPILESKFKVQDTCGVHNLHG. Residues 345-365 form a helical membrane-spanning segment; sequence MPGVLGVLLGVLVAGLATHEA. Topologically, residues 366 to 391 are extracellular; that stretch reads YGDGLESVFPLIAEGQRSATSQAMYQ. Residues 392-412 traverse the membrane as a helical segment; sequence LFGLFVTLMFASVGGGLGGLL. The Cytoplasmic segment spans residues 413 to 471; that stretch reads LKLPFLDSPPDSQCYEDQVHWQAPGATLSPLPTPAFQVPGEHEDKAQRPLRVEEADTQA. The tract at residues 414–422 is interaction with ANK3; that stretch reads KLPFLDSPP. The Basolateral sorting signal signature appears at 427–430; the sequence is YEDQ. The disordered stretch occupies residues 437 to 471; that stretch reads GATLSPLPTPAFQVPGEHEDKAQRPLRVEEADTQA. Positions 452-471 are enriched in basic and acidic residues; sequence GEHEDKAQRPLRVEEADTQA.

This sequence belongs to the ammonium transporter (TC 2.A.49) family. Rh subfamily. As to quaternary structure, interacts (via C-terminus) with ANK2 and ANK3; required for targeting to the basolateral membrane. In terms of processing, N-glycosylated.

The protein resides in the cell membrane. It localises to the basolateral cell membrane. It catalyses the reaction NH4(+)(in) = NH4(+)(out). It carries out the reaction methylamine(out) = methylamine(in). The catalysed reaction is CO2(out) = CO2(in). Functionally, ammonium transporter involved in the maintenance of acid-base homeostasis. Transports ammonium and its related derivative methylammonium across the basolateral plasma membrane of epithelial cells likely contributing to renal transepithelial ammonia transport and ammonia metabolism. May transport either NH4(+) or NH3 ammonia species predominantly mediating an electrogenic NH4(+) transport. May act as a CO2 channel providing for renal acid secretion. The protein is Ammonium transporter Rh type B (RHBG) of Pongo pygmaeus (Bornean orangutan).